A 211-amino-acid polypeptide reads, in one-letter code: Riboflavin kinase (211 aa).

The H-T-H motif-like stretch occupies residues 1 to 81 (MKCIDRRLIG…DLLRYFNILS (81 aa)). The riboflavin kinase stretch occupies residues 82–211 (IRLSGRVVSG…DRVEIEIYLE (130 aa)). A CDP-binding site is contributed by 91-96 (GLGEGA). Mg(2+)-binding residues include Thr-120 and Asn-122. FMN contacts are provided by Thr-177 and Glu-185. A CDP-binding site is contributed by 190-193 (FKLR).

Belongs to the archaeal riboflavin kinase family. It depends on Mg(2+) as a cofactor.

It catalyses the reaction riboflavin + CTP = CDP + FMN + H(+). It participates in cofactor biosynthesis; FMN biosynthesis; FMN from riboflavin (CTP route): step 1/1. Catalyzes the CTP-dependent phosphorylation of riboflavin (vitamin B2) to form flavin mononucleotide (FMN). This is Riboflavin kinase (ribK) from Pyrobaculum islandicum (strain DSM 4184 / JCM 9189 / GEO3).